The following is a 901-amino-acid chain: Alanine--tRNA ligase (901 aa).

H600, H604, C704, and H708 together coordinate Zn(2+).

It belongs to the class-II aminoacyl-tRNA synthetase family. Requires Zn(2+) as cofactor.

It is found in the cytoplasm. It carries out the reaction tRNA(Ala) + L-alanine + ATP = L-alanyl-tRNA(Ala) + AMP + diphosphate. Its function is as follows. Catalyzes the attachment of alanine to tRNA(Ala) in a two-step reaction: alanine is first activated by ATP to form Ala-AMP and then transferred to the acceptor end of tRNA(Ala). Also edits incorrectly charged Ser-tRNA(Ala) and Gly-tRNA(Ala) via its editing domain. In Ignicoccus hospitalis (strain KIN4/I / DSM 18386 / JCM 14125), this protein is Alanine--tRNA ligase.